Reading from the N-terminus, the 410-residue chain is Argininosuccinate synthase (410 aa).

9 to 17 (AYSGGLDTS) is a binding site for ATP. Residue Y86 participates in L-citrulline binding. G116 serves as a coordination point for ATP. L-aspartate is bound by residues T118, N122, and D123. Residue N122 coordinates L-citrulline. R126, S174, E259, and Y271 together coordinate L-citrulline.

The protein belongs to the argininosuccinate synthase family. Type 1 subfamily. In terms of assembly, homotetramer.

Its subcellular location is the cytoplasm. It carries out the reaction L-citrulline + L-aspartate + ATP = 2-(N(omega)-L-arginino)succinate + AMP + diphosphate + H(+). Its pathway is amino-acid biosynthesis; L-arginine biosynthesis; L-arginine from L-ornithine and carbamoyl phosphate: step 2/3. The polypeptide is Argininosuccinate synthase (Limosilactobacillus reuteri (strain DSM 20016) (Lactobacillus reuteri)).